A 226-amino-acid polypeptide reads, in one-letter code: UPF0173 metal-dependent hydrolase Fnod_0635 (226 aa).

This sequence belongs to the UPF0173 family.

This Fervidobacterium nodosum (strain ATCC 35602 / DSM 5306 / Rt17-B1) protein is UPF0173 metal-dependent hydrolase Fnod_0635.